A 544-amino-acid polypeptide reads, in one-letter code: Pyruvate kinase (544 aa).

Residue Arg-31 participates in substrate binding. 2 residues coordinate K(+): Asn-33 and Asp-61. 33-36 contacts ATP; that stretch reads NSAH. Residue Arg-68 coordinates ATP. Residue Glu-204 coordinates Mg(2+). Substrate contacts are provided by Gly-227, Asp-228, and Thr-260. Asp-228 is a Mg(2+) binding site.

Belongs to the pyruvate kinase family. Homotetramer. The cofactor is Mg(2+). Requires K(+) as cofactor.

It catalyses the reaction pyruvate + ATP = phosphoenolpyruvate + ADP + H(+). The protein operates within carbohydrate degradation; glycolysis; pyruvate from D-glyceraldehyde 3-phosphate: step 5/5. The protein is Pyruvate kinase of Thermoplasma acidophilum (strain ATCC 25905 / DSM 1728 / JCM 9062 / NBRC 15155 / AMRC-C165).